Reading from the N-terminus, the 313-residue chain is Serine/threonine-protein kinase SZE1 (313 aa).

Gly-2 carries N-myristoyl glycine lipidation. Residues 43 to 311 enclose the Protein kinase domain; it reads MELGESLGYI…EVLDNLNAIA (269 aa). Residues 49–57 and Lys-71 contribute to the ATP site; that span reads LGYINPKTL.

Belongs to the protein kinase superfamily. Ser/Thr protein kinase family. In terms of assembly, component of an immune signaling complex made of, at least, SZE1, BKN2/SZE2, ZAR1 and ZED1. Interacts directly with ZED1, ZAR1 and Pseudomonas syringae HOPZ1A at the plasma membrane. In terms of processing, N-terminal myristoylation is critical for plasma membrane localization and implication in defense responses. Post-translationally, autophosphorylated. As to expression, expressed in roots, seedlings, rosette leaves, floral organs, siliques and inflorescence stems.

Its subcellular location is the cell membrane. It carries out the reaction L-seryl-[protein] + ATP = O-phospho-L-seryl-[protein] + ADP + H(+). It catalyses the reaction L-threonyl-[protein] + ATP = O-phospho-L-threonyl-[protein] + ADP + H(+). In terms of biological role, together with BKN2/SZE2 and ZED1, required for effector-triggered immunity (e.g. Pseudomonas syringae effector type III HopZ1a) via the activation of ZAR1, thus being essential for resistance against P.syringae pv. tomato DC3000 expressing HopZ1a. The protein is Serine/threonine-protein kinase SZE1 of Arabidopsis thaliana (Mouse-ear cress).